A 146-amino-acid chain; its full sequence is [Ribosomal protein bS18]-alanine N-acetyltransferase (146 aa).

An N-acetyltransferase domain is found at 2–146; it reads SIISQIEACD…ENAVVMACYL (145 aa). An acetyl-CoA-binding site is contributed by 69–71; that stretch reads IAI. E103 acts as the Proton acceptor in catalysis. An acetyl-CoA-binding site is contributed by N108. Y114 serves as the catalytic Proton donor.

Belongs to the acetyltransferase family. RimI subfamily.

The protein resides in the cytoplasm. The enzyme catalyses N-terminal L-alanyl-[ribosomal protein bS18] + acetyl-CoA = N-terminal N(alpha)-acetyl-L-alanyl-[ribosomal protein bS18] + CoA + H(+). Functionally, acetylates the N-terminal alanine of ribosomal protein bS18. The sequence is that of [Ribosomal protein bS18]-alanine N-acetyltransferase from Haemophilus influenzae (strain ATCC 51907 / DSM 11121 / KW20 / Rd).